Here is a 191-residue protein sequence, read N- to C-terminus: 3-isopropylmalate dehydratase small subunit (191 aa).

This sequence belongs to the LeuD family. LeuD type 1 subfamily. In terms of assembly, heterodimer of LeuC and LeuD.

The enzyme catalyses (2R,3S)-3-isopropylmalate = (2S)-2-isopropylmalate. Its pathway is amino-acid biosynthesis; L-leucine biosynthesis; L-leucine from 3-methyl-2-oxobutanoate: step 2/4. Functionally, catalyzes the isomerization between 2-isopropylmalate and 3-isopropylmalate, via the formation of 2-isopropylmaleate. This chain is 3-isopropylmalate dehydratase small subunit, found in Staphylococcus saprophyticus subsp. saprophyticus (strain ATCC 15305 / DSM 20229 / NCIMB 8711 / NCTC 7292 / S-41).